Reading from the N-terminus, the 342-residue chain is Methylthioribose-1-phosphate isomerase (342 aa).

Substrate-binding positions include 49–51 (RGA), R86, and Q187. Catalysis depends on D228, which acts as the Proton donor. 238-239 (NK) is a binding site for substrate.

This sequence belongs to the eIF-2B alpha/beta/delta subunits family. MtnA subfamily.

The enzyme catalyses 5-(methylsulfanyl)-alpha-D-ribose 1-phosphate = 5-(methylsulfanyl)-D-ribulose 1-phosphate. It participates in amino-acid biosynthesis; L-methionine biosynthesis via salvage pathway; L-methionine from S-methyl-5-thio-alpha-D-ribose 1-phosphate: step 1/6. Functionally, catalyzes the interconversion of methylthioribose-1-phosphate (MTR-1-P) into methylthioribulose-1-phosphate (MTRu-1-P). The sequence is that of Methylthioribose-1-phosphate isomerase from Klebsiella pneumoniae subsp. pneumoniae (strain ATCC 700721 / MGH 78578).